The sequence spans 356 residues: DNA polymerase IV (356 aa).

The 182-residue stretch at 6–187 (IIHIDMDYFF…LDIGDFPGVG (182 aa)) folds into the UmuC domain. Mg(2+) contacts are provided by Asp10 and Asp105. Glu106 is a catalytic residue.

It belongs to the DNA polymerase type-Y family. In terms of assembly, monomer. Mg(2+) serves as cofactor.

It localises to the cytoplasm. It catalyses the reaction DNA(n) + a 2'-deoxyribonucleoside 5'-triphosphate = DNA(n+1) + diphosphate. In terms of biological role, poorly processive, error-prone DNA polymerase involved in untargeted mutagenesis. Copies undamaged DNA at stalled replication forks, which arise in vivo from mismatched or misaligned primer ends. These misaligned primers can be extended by PolIV. Exhibits no 3'-5' exonuclease (proofreading) activity. May be involved in translesional synthesis, in conjunction with the beta clamp from PolIII. The protein is DNA polymerase IV of Staphylococcus aureus (strain JH1).